Consider the following 602-residue polypeptide: Exo-poly-alpha-D-galacturonosidase (602 aa).

An N-terminal signal peptide occupies residues 1 to 27; that stretch reads MKVITFSRRSALASIVATCLMSTPALA. One can recognise a Fibronectin type-III domain in the interval 32–149; that stretch reads APQKLQIPTL…TVTTTTTAVP (118 aa). Residue D395 is the Proton donor of the active site. H428 is an active-site residue.

Belongs to the glycosyl hydrolase 28 family.

The protein resides in the secreted. The catalysed reaction is [(1-&gt;4)-alpha-D-galacturonosyl](n) + H2O = alpha-D-galacturonosyl-(1-&gt;4)-D-galacturonate + [(1-&gt;4)-alpha-D-galacturonosyl](n-2). Functionally, contributes significantly to bacterial utilization of polygalacturonate and the induction of pectate lyase in the presence of extracellular pectic polymers. The sequence is that of Exo-poly-alpha-D-galacturonosidase (pehX) from Dickeya chrysanthemi (Pectobacterium chrysanthemi).